The sequence spans 1260 residues: uncharacterized protein (1260 aa).

The protein belongs to the oxoprolinase family.

This is an uncharacterized protein from Schizosaccharomyces pombe (strain 972 / ATCC 24843) (Fission yeast).